A 305-amino-acid polypeptide reads, in one-letter code: Lipoyl synthase (305 aa).

Positions 41, 46, 52, 68, 72, 75, and 281 each coordinate [4Fe-4S] cluster. A Radical SAM core domain is found at 54–270; that stretch reads GARRTATFMI…RKVAMDKGFK (217 aa). Over residues 283–298 the composition is skewed to basic and acidic residues; it reads HADEQVNEAAKEKQRQ. Positions 283–305 are disordered; it reads HADEQVNEAAKEKQRQGEAQLNS.

Belongs to the radical SAM superfamily. Lipoyl synthase family. [4Fe-4S] cluster serves as cofactor.

It is found in the cytoplasm. It carries out the reaction [[Fe-S] cluster scaffold protein carrying a second [4Fe-4S](2+) cluster] + N(6)-octanoyl-L-lysyl-[protein] + 2 oxidized [2Fe-2S]-[ferredoxin] + 2 S-adenosyl-L-methionine + 4 H(+) = [[Fe-S] cluster scaffold protein] + N(6)-[(R)-dihydrolipoyl]-L-lysyl-[protein] + 4 Fe(3+) + 2 hydrogen sulfide + 2 5'-deoxyadenosine + 2 L-methionine + 2 reduced [2Fe-2S]-[ferredoxin]. It functions in the pathway protein modification; protein lipoylation via endogenous pathway; protein N(6)-(lipoyl)lysine from octanoyl-[acyl-carrier-protein]. Catalyzes the radical-mediated insertion of two sulfur atoms into the C-6 and C-8 positions of the octanoyl moiety bound to the lipoyl domains of lipoate-dependent enzymes, thereby converting the octanoylated domains into lipoylated derivatives. In Staphylococcus aureus (strain bovine RF122 / ET3-1), this protein is Lipoyl synthase.